Reading from the N-terminus, the 764-residue chain is 5-methyltetrahydropteroyltriglutamate--homocysteine methyltransferase (764 aa).

5-methyltetrahydropteroyltri-L-glutamate contacts are provided by residues 16–19 and lysine 112; that span reads RELK. L-homocysteine is bound by residues 431–433 and glutamate 484; that span reads IGS. Residues 431 to 433 and glutamate 484 each bind L-methionine; that span reads IGS. 5-methyltetrahydropteroyltri-L-glutamate is bound by residues 515 to 516 and tryptophan 561; that span reads RC. Aspartate 599 provides a ligand contact to L-homocysteine. Aspartate 599 contacts L-methionine. Residue glutamate 605 coordinates 5-methyltetrahydropteroyltri-L-glutamate. Residues histidine 641, cysteine 643, and glutamate 665 each coordinate Zn(2+). The active-site Proton donor is histidine 694. Cysteine 726 lines the Zn(2+) pocket.

This sequence belongs to the vitamin-B12 independent methionine synthase family. Zn(2+) serves as cofactor.

The catalysed reaction is 5-methyltetrahydropteroyltri-L-glutamate + L-homocysteine = tetrahydropteroyltri-L-glutamate + L-methionine. It participates in amino-acid biosynthesis; L-methionine biosynthesis via de novo pathway; L-methionine from L-homocysteine (MetE route): step 1/1. Its function is as follows. Catalyzes the transfer of a methyl group from 5-methyltetrahydrofolate to homocysteine resulting in methionine formation. The sequence is that of 5-methyltetrahydropteroyltriglutamate--homocysteine methyltransferase from Paraburkholderia phytofirmans (strain DSM 17436 / LMG 22146 / PsJN) (Burkholderia phytofirmans).